Consider the following 201-residue polypeptide: Recombination protein RecR (201 aa).

A C4-type zinc finger spans residues 57-72; the sequence is CADCRTFTEQEICTIC. The region spanning 81–176 is the Toprim domain; that stretch reads GLICVVESPA…DASRIAHGVP (96 aa).

The protein belongs to the RecR family.

Functionally, may play a role in DNA repair. It seems to be involved in an RecBC-independent recombinational process of DNA repair. It may act with RecF and RecO. The chain is Recombination protein RecR from Erwinia tasmaniensis (strain DSM 17950 / CFBP 7177 / CIP 109463 / NCPPB 4357 / Et1/99).